The sequence spans 127 residues: Holo-[acyl-carrier-protein] synthase (127 aa).

Residues Asp8 and Glu56 each coordinate Mg(2+).

Belongs to the P-Pant transferase superfamily. AcpS family. The cofactor is Mg(2+).

The protein localises to the cytoplasm. It carries out the reaction apo-[ACP] + CoA = holo-[ACP] + adenosine 3',5'-bisphosphate + H(+). Functionally, transfers the 4'-phosphopantetheine moiety from coenzyme A to a Ser of acyl-carrier-protein. The sequence is that of Holo-[acyl-carrier-protein] synthase from Caldanaerobacter subterraneus subsp. tengcongensis (strain DSM 15242 / JCM 11007 / NBRC 100824 / MB4) (Thermoanaerobacter tengcongensis).